The sequence spans 396 residues: Tryptophan synthase beta chain (396 aa).

Lysine 86 is subject to N6-(pyridoxal phosphate)lysine.

Belongs to the TrpB family. In terms of assembly, tetramer of two alpha and two beta chains. Pyridoxal 5'-phosphate serves as cofactor.

The catalysed reaction is (1S,2R)-1-C-(indol-3-yl)glycerol 3-phosphate + L-serine = D-glyceraldehyde 3-phosphate + L-tryptophan + H2O. Its pathway is amino-acid biosynthesis; L-tryptophan biosynthesis; L-tryptophan from chorismate: step 5/5. In terms of biological role, the beta subunit is responsible for the synthesis of L-tryptophan from indole and L-serine. The chain is Tryptophan synthase beta chain from Pectobacterium carotovorum subsp. carotovorum (strain PC1).